We begin with the raw amino-acid sequence, 217 residues long: Large ribosomal subunit protein bL25 (217 aa).

The segment at 178 to 217 (VVAPTEEPTEEEIEAMEGEQQTEEPEVVGESKEDEEKTEE) is disordered. Residues 184 to 205 (EPTEEEIEAMEGEQQTEEPEVV) show a composition bias toward acidic residues. Basic and acidic residues predominate over residues 206 to 217 (GESKEDEEKTEE).

Belongs to the bacterial ribosomal protein bL25 family. CTC subfamily. In terms of assembly, part of the 50S ribosomal subunit; part of the 5S rRNA/L5/L18/L25 subcomplex. Contacts the 5S rRNA. Binds to the 5S rRNA independently of L5 and L18.

This is one of the proteins that binds to the 5S RNA in the ribosome where it forms part of the central protuberance. The sequence is that of Large ribosomal subunit protein bL25 from Staphylococcus aureus (strain USA300).